The following is a 295-amino-acid chain: Multistep phosphorelay regulator 1 (295 aa).

The segment at 89 to 110 is disordered; the sequence is KSENNQQLAANETAGAPEGTEE. Low complexity predominate over residues 97 to 106; it reads AANETAGAPE. The HPt domain maps to 182 to 284; it reads EHEFSKSIVW…NDFYKDARAY (103 aa). Residue histidine 221 is modified to Phosphohistidine.

Binds to the msc4 response regulator which is part of a multistep phosphorelay system that transmits oxidative stress signals to the spc1 MAPK cascade. This chain is Multistep phosphorelay regulator 1 (mpr1), found in Schizosaccharomyces pombe (strain 972 / ATCC 24843) (Fission yeast).